The following is a 405-amino-acid chain: Acetylornithine aminotransferase (405 aa).

Residues Gly107 to Ala108 and Phe140 each bind pyridoxal 5'-phosphate. Position 143 (Arg143) interacts with N(2)-acetyl-L-ornithine. A pyridoxal 5'-phosphate-binding site is contributed by Asp225–Gln228. An N6-(pyridoxal phosphate)lysine modification is found at Lys254. N(2)-acetyl-L-ornithine is bound at residue Ser282. Thr283 contributes to the pyridoxal 5'-phosphate binding site.

The protein belongs to the class-III pyridoxal-phosphate-dependent aminotransferase family. ArgD subfamily. In terms of assembly, homodimer. Requires pyridoxal 5'-phosphate as cofactor.

It localises to the cytoplasm. The catalysed reaction is N(2)-acetyl-L-ornithine + 2-oxoglutarate = N-acetyl-L-glutamate 5-semialdehyde + L-glutamate. It participates in amino-acid biosynthesis; L-arginine biosynthesis; N(2)-acetyl-L-ornithine from L-glutamate: step 4/4. The polypeptide is Acetylornithine aminotransferase (Shewanella oneidensis (strain ATCC 700550 / JCM 31522 / CIP 106686 / LMG 19005 / NCIMB 14063 / MR-1)).